A 170-amino-acid chain; its full sequence is Large ribosomal subunit protein bL9 (170 aa).

The disordered stretch occupies residues 149-170; it reads RTEEADAEESAAEEPAVEEAAE. Positions 153–170 are enriched in acidic residues; sequence ADAEESAAEEPAVEEAAE.

The protein belongs to the bacterial ribosomal protein bL9 family.

In terms of biological role, binds to the 23S rRNA. This chain is Large ribosomal subunit protein bL9, found in Oleidesulfovibrio alaskensis (strain ATCC BAA-1058 / DSM 17464 / G20) (Desulfovibrio alaskensis).